A 154-amino-acid polypeptide reads, in one-letter code: Transcriptional repressor NrdR (154 aa).

A zinc finger spans residues 3–34 (CPFCGANDTKVIDSRLVAEGEQVRRRRECLAC). An ATP-cone domain is found at 49–139 (PRLIKQDGSR…VYRRFQDLNE (91 aa)).

It belongs to the NrdR family. Zn(2+) is required as a cofactor.

Negatively regulates transcription of bacterial ribonucleotide reductase nrd genes and operons by binding to NrdR-boxes. The polypeptide is Transcriptional repressor NrdR (Pseudomonas syringae pv. syringae (strain B728a)).